An 876-amino-acid polypeptide reads, in one-letter code: Alanine--tRNA ligase (876 aa).

The Zn(2+) site is built by His-566, His-570, Cys-667, and His-671.

The protein belongs to the class-II aminoacyl-tRNA synthetase family. Zn(2+) serves as cofactor.

The protein resides in the cytoplasm. It catalyses the reaction tRNA(Ala) + L-alanine + ATP = L-alanyl-tRNA(Ala) + AMP + diphosphate. Catalyzes the attachment of alanine to tRNA(Ala) in a two-step reaction: alanine is first activated by ATP to form Ala-AMP and then transferred to the acceptor end of tRNA(Ala). Also edits incorrectly charged Ser-tRNA(Ala) and Gly-tRNA(Ala) via its editing domain. This chain is Alanine--tRNA ligase, found in Albidiferax ferrireducens (strain ATCC BAA-621 / DSM 15236 / T118) (Rhodoferax ferrireducens).